The primary structure comprises 261 residues: Global transcriptional regulator CodY (261 aa).

The tract at residues 1–159 is GAF domain; that stretch reads MANLLDKTRK…ASTVVGLQLL (159 aa). Residues 207–226 constitute a DNA-binding region (H-T-H motif); sequence ASVIADRIGITRSVIVNALR.

It belongs to the CodY family.

It is found in the cytoplasm. Functionally, DNA-binding global transcriptional regulator which is involved in the adaptive response to starvation and acts by directly or indirectly controlling the expression of numerous genes in response to nutrient availability. During rapid exponential growth, CodY is highly active and represses genes whose products allow adaptation to nutrient depletion. The sequence is that of Global transcriptional regulator CodY from Streptococcus thermophilus (strain CNRZ 1066).